The chain runs to 177 residues: Large ribosomal subunit protein uL6 (177 aa).

The protein belongs to the universal ribosomal protein uL6 family. As to quaternary structure, part of the 50S ribosomal subunit.

In terms of biological role, this protein binds to the 23S rRNA, and is important in its secondary structure. It is located near the subunit interface in the base of the L7/L12 stalk, and near the tRNA binding site of the peptidyltransferase center. The chain is Large ribosomal subunit protein uL6 from Bartonella bacilliformis (strain ATCC 35685 / KC583 / Herrer 020/F12,63).